A 143-amino-acid chain; its full sequence is Large-conductance mechanosensitive channel (143 aa).

3 consecutive transmembrane segments (helical) span residues 10–30 (FAIK…GAFG), 40–60 (IIMP…QKFI), and 86–106 (GNFL…FLMV).

Belongs to the MscL family. In terms of assembly, homopentamer.

It localises to the cell inner membrane. In terms of biological role, channel that opens in response to stretch forces in the membrane lipid bilayer. May participate in the regulation of osmotic pressure changes within the cell. The polypeptide is Large-conductance mechanosensitive channel (Acinetobacter baumannii (strain ATCC 17978 / DSM 105126 / CIP 53.77 / LMG 1025 / NCDC KC755 / 5377)).